The primary structure comprises 434 residues: Nuclear distribution protein PAC1 (434 aa).

A LisH domain is found at 8–40 (QKDDLHKAMLDYLYANNHTAAFNALKESAGITY). Positions 57 to 83 (TSVIRLQKKIMELENRNAALQEELSMS) form a coiled coil. 7 WD repeats span residues 106-147 (GHRA…RTLK), 149-187 (HTKP…KNTK), 191-230 (GHDH…QVRT), 233-272 (GHSE…PKSE), 275-334 (GHEN…MIRN), 337-378 (GHDN…RIVE), and 401-434 (KKVN…IWLP).

Belongs to the WD repeat LIS1/nudF family. Self-associates. Interacts with NDL1 and dynein.

It is found in the cytoplasm. The protein localises to the cytoskeleton. The protein resides in the spindle pole. In terms of biological role, positively regulates the activity of the minus-end directed microtubule motor protein dynein. May enhance dynein-mediated microtubule sliding by targeting dynein to the microtubule plus end. Required for nuclear migration during vegetative growth as well as development. Required for retrograde early endosome (EE) transport from the hyphal tip. Required for localization of dynein to the mitotic spindle poles. Recruits additional proteins to the dynein complex at SPBs. The chain is Nuclear distribution protein PAC1 from Coprinopsis cinerea (strain Okayama-7 / 130 / ATCC MYA-4618 / FGSC 9003) (Inky cap fungus).